A 766-amino-acid polypeptide reads, in one-letter code: Pyrophosphate-energized vacuolar membrane proton pump (766 aa).

Topologically, residues 2-8 (GAAILPD) are intravacuolar. A helical transmembrane segment spans residues 9 to 35 (LGTEILIPVCAVIGIAFALFQWLLVSK). At 36–84 (VKLSAVRDASPNAAAKNGYNDYLIEEEEGINDHNVVVKCAEIQNAISEG) the chain is on the cytoplasmic side. Residues 85-114 (ATSFLFTEYKYVGIFMVAFAILIFLFLGSV) traverse the membrane as a helical segment. Residues 115 to 135 (EGFSTSPQACSYDKTKTCKPA) lie on the Intravacuolar side of the membrane. Cysteine 124 and cysteine 132 are oxidised to a cystine. Residues 136-163 (LATAIFSTVSFLLGGVTSLVSGFLGMKI) traverse the membrane as a helical segment. Residues 164 to 186 (ATYANARTTLEARKGVGKAFITA) are Cytoplasmic-facing. A helical membrane pass occupies residues 187–216 (FRSGAVMGFLLAANGLLVLYIAINLFKIYY). Residues 217–219 (GDD) are Intravacuolar-facing. A helical membrane pass occupies residues 220–248 (WGGLFEAITGYGLGGSSMALFGRVGGGIY). Over 249–286 (TKAADVGADLVGKVERNIPEDDPRNPAVIADNVGDNVG) the chain is Cytoplasmic. Position 250 (lysine 250) interacts with substrate. 3 residues coordinate Mg(2+): aspartate 253, aspartate 257, and aspartate 283. The chain crosses the membrane as a helical span at residues 287 to 312 (DIAGMGSDLFGSYAESSCAALVVASI). The Intravacuolar portion of the chain corresponds to 313–320 (SSFGLNHE). Residues 321–346 (LTAMLYPLIVSSVGILVCLLTTLFAT) form a helical membrane-spanning segment. Residues 347–354 (DFFEIKAV) are Cytoplasmic-facing. The helical transmembrane segment at 355–382 (KEIEPALKKQLVISTVLMTIGVAVVSFV) threads the bilayer. Topologically, residues 383–401 (ALPTSFTIFNFGVQKDVKS) are intravacuolar. The chain crosses the membrane as a helical span at residues 402–425 (WQLFLCVAVGLWAGLIIGFVTEYY). Residues 426-447 (TSNAYSPVQDVADSCRTGAATN) lie on the Cytoplasmic side of the membrane. Residues 448–472 (VIFGLALGYKSVIIPIFAIAISIFV) traverse the membrane as a helical segment. At 473–478 (SFTFAA) the chain is on the intravacuolar side. The helical transmembrane segment at 479–505 (MYGIAVAALGMLSTIATGLAIDAYGPI) threads the bilayer. The Cytoplasmic segment spans residues 506 to 534 (SDNAGGIAEMAGMSHRIRERTDALDAAGN). Mg(2+) is bound by residues aspartate 507 and asparagine 534. A helical membrane pass occupies residues 535 to 563 (TTAAIGKGFAIGSAALVSLALFGAFVSRA). The Intravacuolar segment spans residues 564–573 (SITTVDVLTP). The helical transmembrane segment at 574–602 (KVFIGLIVGAMLPYWFSAMTMKSVGSAAL) threads the bilayer. At 603–631 (KMVEEVRRQFNTIPGLMEGTAKPDYATCV) the chain is on the cytoplasmic side. A helical transmembrane segment spans residues 632-660 (KISTDASIKEMIPPGALVMLTPLVVGILF). A topological domain (intravacuolar) is located at residue glycine 661. A helical membrane pass occupies residues 662 to 689 (VETLSGVLAGSLVSGVQIAISASNTGGA). At 690-732 (WDNAKKYIEAGASEHARSLGPKGSDCHKAAVIGDTIGDPLKDT) the chain is on the cytoplasmic side. Positions 691 and 727 each coordinate Mg(2+). Residue lysine 730 coordinates substrate. Residues 733–758 (SGPSLNILIKLMAVESLVFAPFFATH) form a helical membrane-spanning segment. At 759-765 (GGLLFKI) the chain is on the intravacuolar side.

This sequence belongs to the H(+)-translocating pyrophosphatase (TC 3.A.10) family. K(+)-stimulated subfamily. In terms of assembly, homodimer.

The protein resides in the vacuole membrane. It catalyses the reaction diphosphate + H2O + H(+)(in) = 2 phosphate + 2 H(+)(out). Inhibited by excess pyrophosphate as well as excess Mg(2+). Inhibition by ATP, GTP, and CTP is reversed by increasing the Mg(2+) concentration. This suggests that the substrate is a particular metal complex such as MgPPi(2-). Modification of Asp-283 with DCCD abolishes pyrophosphatase activity. In terms of biological role, proton-translocating inorganic pyrophosphatase that contributes to the transtonoplast (from cytosol to vacuole lumen) H(+)-electrochemical potential difference. It establishes a proton gradient of similar and often greater magnitude than the H(+)-ATPase on the same membrane. This is Pyrophosphate-energized vacuolar membrane proton pump from Vigna radiata var. radiata (Mung bean).